The sequence spans 666 residues: Threonine--tRNA ligase (666 aa).

The TGS domain maps to 7-70 (QQVTLTVTLP…TADCTAEIIT (64 aa)). The segment at 253-555 (DHRKLGTELE…LIEHTAGNFP (303 aa)) is catalytic. Cysteine 351, histidine 402, and histidine 532 together coordinate Zn(2+).

Belongs to the class-II aminoacyl-tRNA synthetase family. As to quaternary structure, homodimer. It depends on Zn(2+) as a cofactor.

The protein resides in the cytoplasm. The enzyme catalyses tRNA(Thr) + L-threonine + ATP = L-threonyl-tRNA(Thr) + AMP + diphosphate + H(+). In terms of biological role, catalyzes the attachment of threonine to tRNA(Thr) in a two-step reaction: L-threonine is first activated by ATP to form Thr-AMP and then transferred to the acceptor end of tRNA(Thr). Also edits incorrectly charged L-seryl-tRNA(Thr). The polypeptide is Threonine--tRNA ligase (Chlorobium phaeovibrioides (strain DSM 265 / 1930) (Prosthecochloris vibrioformis (strain DSM 265))).